The primary structure comprises 121 residues: MRPAKSVEGYIIIVTGVHPEATEEQVEDLFADFGPVKNLHLNLDRRTGYVKGYALIEYATLEQAQKAVDEKNLSLLDEKLEVDFAFLEPPERAPRPSISTRSRSQSPEVQHRDRDVAMAEP.

One can recognise an RRM domain in the interval 10–87 (YIIIVTGVHP…EKLEVDFAFL (78 aa)). Positions 90–121 (PERAPRPSISTRSRSQSPEVQHRDRDVAMAEP) are disordered. A compositionally biased stretch (polar residues) spans 97–108 (SISTRSRSQSPE). Residues 109–121 (VQHRDRDVAMAEP) are compositionally biased toward basic and acidic residues.

It is found in the cytoplasm. Its subcellular location is the nucleus. This is an uncharacterized protein from Schizosaccharomyces pombe (strain 972 / ATCC 24843) (Fission yeast).